A 490-amino-acid chain; its full sequence is Aspartyl/glutamyl-tRNA(Asn/Gln) amidotransferase subunit B (490 aa).

This sequence belongs to the GatB/GatE family. GatB subfamily. Heterotrimer of A, B and C subunits.

It carries out the reaction L-glutamyl-tRNA(Gln) + L-glutamine + ATP + H2O = L-glutaminyl-tRNA(Gln) + L-glutamate + ADP + phosphate + H(+). The enzyme catalyses L-aspartyl-tRNA(Asn) + L-glutamine + ATP + H2O = L-asparaginyl-tRNA(Asn) + L-glutamate + ADP + phosphate + 2 H(+). Allows the formation of correctly charged Asn-tRNA(Asn) or Gln-tRNA(Gln) through the transamidation of misacylated Asp-tRNA(Asn) or Glu-tRNA(Gln) in organisms which lack either or both of asparaginyl-tRNA or glutaminyl-tRNA synthetases. The reaction takes place in the presence of glutamine and ATP through an activated phospho-Asp-tRNA(Asn) or phospho-Glu-tRNA(Gln). The chain is Aspartyl/glutamyl-tRNA(Asn/Gln) amidotransferase subunit B from Burkholderia pseudomallei (strain 1106a).